Here is a 685-residue protein sequence, read N- to C-terminus: Sulfate transporter 4.1, chloroplastic (685 aa).

A chloroplast-targeting transit peptide spans 1-23 (MSYASLSVKDLTSLVSRSGTGSS). Positions 15 to 26 (VSRSGTGSSSSL) are enriched in low complexity. The segment at 15–53 (VSRSGTGSSSSLKPPGQTRPVKVIPLQHPDTSNEARPPS) is disordered. 12 helical membrane-spanning segments follow: residues 97–117 (LDLMAGITVGIMLVPQAMSYA), 122–142 (LPPIYGLYSSFVPVFVYAIFG), 147–167 (LAIGPVALVSLLVSNALGGIA), 175–195 (IELAILLALLVGILECIMGLL), 203–223 (FISHSVISGFTSASAIVIGLS), 255–275 (WPPFVMGSLILVILQVMKHVG), 283–303 (FLRAAAPLTGIVLGTTIAKVF), 332–352 (TLLPTSALITGVAILESVGIA), 369–389 (LFGLGVANILGSLFSAYPATG), 406–426 (LSGLITGIIIGCSLLFLTPMF), 434–454 (LAAIVISAVSGLVDYDEAIFL), and 473–493 (LFFGIEIGVLVGVGFSLAFVI). An STAS domain is found at 518 to 642 (QYPEAYTYNG…VRVHDAVQVC (125 aa)).

It belongs to the SLC26A/SulP transporter (TC 2.A.53) family. As to expression, expressed both in roots and leaves.

It is found in the plastid. The protein localises to the chloroplast membrane. Its function is as follows. H(+)/sulfate cotransporter that may play a role in the regulation of sulfate assimilation. The protein is Sulfate transporter 4.1, chloroplastic (SULTR4;1) of Arabidopsis thaliana (Mouse-ear cress).